Here is a 208-residue protein sequence, read N- to C-terminus: MISDIEFALSEHNFQFAYKDLQKINLYIKRILLLNTRFNLISNSNSNFNSILNLHVIDSLLGLSTVKEINPSEVLDVGSGAGFPGIILAIFDTSRKYYLLERSKKKSTFLKMIKLELDLENVKILEYEIEKEKKKYEFITIRAFRSMNEYALILKNLLKGGGLIMAYKGKFDRINLEVNQIKNLFSKIEVKSLNSKLRVDRNLVLLYR.

Residues Gly-78, Phe-83, 101–103 (ERS), 129–130 (IE), and Arg-142 contribute to the S-adenosyl-L-methionine site.

This sequence belongs to the methyltransferase superfamily. RNA methyltransferase RsmG family.

It is found in the cytoplasm. Its function is as follows. Specifically methylates the N7 position of a guanine in 16S rRNA. The protein is Ribosomal RNA small subunit methyltransferase G of Borreliella burgdorferi (strain ZS7) (Borrelia burgdorferi).